The primary structure comprises 426 residues: Phosphoribosylamine--glycine ligase (426 aa).

The ATP-grasp domain occupies 109 to 312 (KEVMEAAGVA…LAGVLNAVAT (204 aa)). ATP is bound at residue 138-193 (LDYFGPMYVVKDDGLAAGKGVVVTADRAEARQHIHLVHAAGNPVLLESFLDGPEVS). 2 residues coordinate Mg(2+): Glu282 and Asn284.

The protein belongs to the GARS family. Mg(2+) serves as cofactor. It depends on Mn(2+) as a cofactor.

It catalyses the reaction 5-phospho-beta-D-ribosylamine + glycine + ATP = N(1)-(5-phospho-beta-D-ribosyl)glycinamide + ADP + phosphate + H(+). It functions in the pathway purine metabolism; IMP biosynthesis via de novo pathway; N(1)-(5-phospho-D-ribosyl)glycinamide from 5-phospho-alpha-D-ribose 1-diphosphate: step 2/2. The chain is Phosphoribosylamine--glycine ligase from Corynebacterium ammoniagenes (Brevibacterium ammoniagenes).